Here is a 452-residue protein sequence, read N- to C-terminus: Glutamyl-tRNA(Gln) amidotransferase subunit A (452 aa).

Catalysis depends on charge relay system residues lysine 56 and serine 131. Residue serine 155 is the Acyl-ester intermediate of the active site.

Belongs to the amidase family. GatA subfamily. In terms of assembly, heterotrimer of A, B and C subunits.

It catalyses the reaction L-glutamyl-tRNA(Gln) + L-glutamine + ATP + H2O = L-glutaminyl-tRNA(Gln) + L-glutamate + ADP + phosphate + H(+). Its function is as follows. Allows the formation of correctly charged Gln-tRNA(Gln) through the transamidation of misacylated Glu-tRNA(Gln) in organisms which lack glutaminyl-tRNA synthetase. The reaction takes place in the presence of glutamine and ATP through an activated gamma-phospho-Glu-tRNA(Gln). The polypeptide is Glutamyl-tRNA(Gln) amidotransferase subunit A (Campylobacter curvus (strain 525.92)).